A 235-amino-acid chain; its full sequence is AA9 family lytic polysaccharide monooxygenase D (235 aa).

Residues 1–18 (MKAFFAVLAVVSAPFVLG) form the signal peptide. Position 19 (His19) interacts with Cu(2+). Ser29 carries O-linked (Man...) serine glycosylation. The cysteines at positions 61 and 181 are disulfide-linked. His94 is a Cu(2+) binding site. Residues His167 and Gln176 each coordinate O2. Residue Tyr178 participates in Cu(2+) binding. Residue Asn221 is glycosylated (N-linked (GlcNAc...) asparagine).

This sequence belongs to the polysaccharide monooxygenase AA9 family. Cu(2+) serves as cofactor.

It localises to the secreted. It catalyses the reaction [(1-&gt;4)-beta-D-glucosyl]n+m + reduced acceptor + O2 = 4-dehydro-beta-D-glucosyl-[(1-&gt;4)-beta-D-glucosyl]n-1 + [(1-&gt;4)-beta-D-glucosyl]m + acceptor + H2O.. In terms of biological role, lytic polysaccharide monooxygenase (LPMO) that depolymerizes crystalline and amorphous polysaccharides via the oxidation of scissile alpha- or beta-(1-4)-glycosidic bonds, yielding only C1 oxidation products. Catalysis by LPMOs requires the reduction of the active-site copper from Cu(II) to Cu(I) by a reducing agent and H(2)O(2) or O(2) as a cosubstrate. In Phanerodontia chrysosporium (White-rot fungus), this protein is AA9 family lytic polysaccharide monooxygenase D.